Consider the following 638-residue polypeptide: Zona pellucida sperm-binding protein 1 (638 aa).

The first 25 residues, 1–25 (MAGGSATTWGYPVALLLLVATLGLG), serve as a signal peptide directing secretion. The Extracellular portion of the chain corresponds to 26-601 (RWLQPDPGLP…DSNGNSSLRP (576 aa)). The N-linked (GlcNAc...) asparagine glycan is linked to Asn-76. Positions 165 to 175 (LPTSGHTSQGS) are enriched in polar residues. Residues 165–208 (LPTSGHTSQGSGHAFPSPLDPGHSSVHPTPALPSPGPGPTLATL) are disordered. In terms of domain architecture, P-type spans 234–274 (EQCQVASGHLPCIVRRTSKEACQQAGCCYDNTREVPCYYGN). Disulfide bonds link Cys-236–Cys-261, Cys-245–Cys-260, and Cys-255–Cys-270. Positions 279-553 (QCFRDGYFVL…TACSTGTTRQ (275 aa)) constitute a ZP domain. N-linked (GlcNAc...) asparagine glycosylation is present at Asn-379. Cys-457 and Cys-478 are disulfide-bonded. A disordered region spans residues 549–594 (GTTRQRRSSGHRNDTARPQDIVSSPGPVGFEDSYGQEPTLGPTDSN). The propeptide at 554–638 (RRSSGHRNDT…AQKLWESNRQ (85 aa)) is removed in mature form. Asn-561 and Asn-596 each carry an N-linked (GlcNAc...) asparagine glycan. The chain crosses the membrane as a helical span at residues 602–622 (LLWAVLLLPAVALVLGFGVFV). At 623-638 (GLSQTWAQKLWESNRQ) the chain is on the cytoplasmic side.

Belongs to the ZP domain family. ZPB subfamily. Polymers of ZP2 and ZP3 organized into long filaments cross-linked by ZP1 homodimers. Interacts with ZP3. Proteolytically cleaved before the transmembrane segment to yield the secreted ectodomain incorporated in the zona pellucida. Post-translationally, O-glycosylated. Expressed in oocytes (at protein level).

It is found in the zona pellucida. Its subcellular location is the cell membrane. In terms of biological role, component of the zona pellucida, an extracellular matrix surrounding oocytes which mediates sperm binding, induction of the acrosome reaction and prevents post-fertilization polyspermy. The zona pellucida is composed of 3 to 4 glycoproteins, ZP1, ZP2, ZP3, and ZP4. ZP1 ensures the structural integrity of the zona pellucida. This chain is Zona pellucida sperm-binding protein 1 (ZP1), found in Homo sapiens (Human).